Here is a 700-residue protein sequence, read N- to C-terminus: Elongation factor G (700 aa).

The region spanning Asp8–Leu290 is the tr-type G domain. GTP is bound by residues Ala17 to Thr24, Asp88 to His92, and Asn142 to Asp145.

The protein belongs to the TRAFAC class translation factor GTPase superfamily. Classic translation factor GTPase family. EF-G/EF-2 subfamily.

Its subcellular location is the cytoplasm. Its function is as follows. Catalyzes the GTP-dependent ribosomal translocation step during translation elongation. During this step, the ribosome changes from the pre-translocational (PRE) to the post-translocational (POST) state as the newly formed A-site-bound peptidyl-tRNA and P-site-bound deacylated tRNA move to the P and E sites, respectively. Catalyzes the coordinated movement of the two tRNA molecules, the mRNA and conformational changes in the ribosome. In Vesicomyosocius okutanii subsp. Calyptogena okutanii (strain HA), this protein is Elongation factor G.